Consider the following 847-residue polypeptide: Beta-hexosaminidase (847 aa).

Cystine bridges form between C31–C40, C377–C385, and C484–C530. E519 (proton donor) is an active-site residue.

Belongs to the glycosyl hydrolase 20 family.

It carries out the reaction Hydrolysis of terminal non-reducing N-acetyl-D-hexosamine residues in N-acetyl-beta-D-hexosaminides.. It participates in glycan degradation; chitin degradation. Hydrolysis of terminal, non-reducing N-acetyl-beta-D-glucosamine residues in chitobiose and higher analogs, and in glycoproteins. The protein is Beta-hexosaminidase (hex) of Vibrio vulnificus.